We begin with the raw amino-acid sequence, 2210 residues long: Mediator of RNA polymerase II transcription subunit 13-like (2210 aa).

Positions 391 to 400 (SKRSQMSTPT) are enriched in polar residues. Disordered regions lie at residues 391 to 414 (SKRSQMSTPTLEEEPASNPATWDF), 435 to 489 (AVGP…PFHH), and 519 to 582 (VSSS…NPAL). Residues 445-458 (SQPGFSAGPSSSSS) are compositionally biased toward low complexity. Residues 468-480 (KTAERQEKGDKLQ) show a composition bias toward basic and acidic residues. A compositionally biased stretch (polar residues) spans 533 to 544 (SRNTSKQMNLNP). Residues 551 to 560 (PISPLPPTLS) show a composition bias toward pro residues. A phosphoserine mark is found at S553 and S560. The short motif at 669–673 (LQRLL) is the LXXLL motif 1 element. Basic and acidic residues predominate over residues 736 to 752 (GTEKDSLKKNKSEDGFG). The tract at residues 736–770 (GTEKDSLKKNKSEDGFGTKDVTTPGHSTPVPDGKN) is disordered. Residues S817, S826, and S923 each carry the phosphoserine modification. A disordered region spans residues 1016-1096 (PQMNTPVTLN…STTRPLNSVE (81 aa)). The segment covering 1025 to 1036 (NSAAPASNSGAG) has biased composition (low complexity). Over residues 1077–1092 (TDQGSPASTPSTTRPL) the composition is skewed to polar residues. The LXXLL motif 2 signature appears at 1225–1229 (LLLLL). A leucine-zipper region spans residues 1380–1401 (LPIPTLLVGYDKDFLTISPFSL). Disordered regions lie at residues 1530-1656 (QTPP…VTER) and 2045-2080 (GNLHSSPNSSPVPSPGSPSGIGVGSHFQHSRSQGER). Over residues 1531 to 1608 (TPPAAAQGQA…ISTTSSSGFS (78 aa)) the composition is skewed to low complexity. Residues 1615-1629 (NPSTGGISADRTQGN) are compositionally biased toward polar residues. Residues 1637–1650 (DPGQSSSQPSQDGQ) show a composition bias toward low complexity. S2083 carries the post-translational modification Phosphoserine.

The protein belongs to the Mediator complex subunit 13 family. As to quaternary structure, component of the Mediator complex, which is composed of MED1, MED4, MED6, MED7, MED8, MED9, MED10, MED11, MED12, MED13, MED13L, MED14, MED15, MED16, MED17, MED18, MED19, MED20, MED21, MED22, MED23, MED24, MED25, MED26, MED27, MED29, MED30, MED31, CCNC, CDK8 and CDC2L6/CDK11. The MED12, MED13, CCNC and CDK8 subunits form a distinct module termed the CDK8 module. Mediator containing the CDK8 module is less active than Mediator lacking this module in supporting transcriptional activation. Individual preparations of the Mediator complex lacking one or more distinct subunits have been variously termed ARC, CRSP, DRIP, PC2, SMCC and TRAP. In terms of tissue distribution, highly expressed in brain (cerebellum), heart (aorta), skeletal muscle, kidney, placenta and peripheral blood leukocytes. Highly expressed in fetal brain.

Its subcellular location is the nucleus. Component of the Mediator complex, a coactivator involved in the regulated transcription of nearly all RNA polymerase II-dependent genes. Mediator functions as a bridge to convey information from gene-specific regulatory proteins to the basal RNA polymerase II transcription machinery. Mediator is recruited to promoters by direct interactions with regulatory proteins and serves as a scaffold for the assembly of a functional preinitiation complex with RNA polymerase II and the general transcription factors. This subunit may specifically regulate transcription of targets of the Wnt signaling pathway and SHH signaling pathway. The sequence is that of Mediator of RNA polymerase II transcription subunit 13-like (MED13L) from Homo sapiens (Human).